We begin with the raw amino-acid sequence, 380 residues long: Cytochrome b (380 aa).

The next 4 membrane-spanning stretches (helical) occupy residues 33-53, 77-98, 113-133, and 178-198; these read FGSL…FLAM, WLIR…YLHI, WNVG…GYVL, and FFAF…LHFL. Heme b contacts are provided by H83 and H97. The heme b site is built by H182 and H196. Residue H201 participates in a ubiquinone binding. Helical transmembrane passes span 226-246, 288-308, 320-340, and 347-367; these read YKDL…SLFS, LGGV…PILH, LTQI…WIGG, and FIIV…VIMP.

This sequence belongs to the cytochrome b family. The cytochrome bc1 complex contains 3 respiratory subunits (MT-CYB, CYC1 and UQCRFS1), 2 core proteins (UQCRC1 and UQCRC2) and probably 6 low-molecular weight proteins. The cofactor is heme b.

It localises to the mitochondrion inner membrane. Component of the ubiquinol-cytochrome c reductase complex (complex III or cytochrome b-c1 complex) that is part of the mitochondrial respiratory chain. The b-c1 complex mediates electron transfer from ubiquinol to cytochrome c. Contributes to the generation of a proton gradient across the mitochondrial membrane that is then used for ATP synthesis. This chain is Cytochrome b (mt-cyb), found in Zeus faber (John Dory).